Consider the following 275-residue polypeptide: NH(3)-dependent NAD(+) synthetase (275 aa).

46–53 (GISGGQDS) serves as a coordination point for ATP. D52 contacts Mg(2+). R140 is a binding site for deamido-NAD(+). T160 is a binding site for ATP. Residue E165 participates in Mg(2+) binding. Deamido-NAD(+)-binding residues include K173 and D180. ATP is bound by residues K189 and T211. Residue 260–261 (HK) coordinates deamido-NAD(+).

The protein belongs to the NAD synthetase family. In terms of assembly, homodimer.

It catalyses the reaction deamido-NAD(+) + NH4(+) + ATP = AMP + diphosphate + NAD(+) + H(+). The protein operates within cofactor biosynthesis; NAD(+) biosynthesis; NAD(+) from deamido-NAD(+) (ammonia route): step 1/1. Its function is as follows. Catalyzes the ATP-dependent amidation of deamido-NAD to form NAD. Uses ammonia as a nitrogen source. This Escherichia coli O6:K15:H31 (strain 536 / UPEC) protein is NH(3)-dependent NAD(+) synthetase.